The sequence spans 326 residues: AA9 family lytic polysaccharide monooxygenase B (326 aa).

Positions 1–19 (MKSFTIAALAALWAQEAAA) are cleaved as a signal peptide. 2 residues coordinate Cu(2+): H20 and H98. Residues C57 and C192 are joined by a disulfide bond. The O2 site is built by H178 and Q187. Y189 lines the Cu(2+) pocket. Positions 265–281 (PSATLTQPTSTATATSA) are enriched in low complexity. The interval 265–286 (PSATLTQPTSTATATSAPGGGG) is disordered. Residues 289 to 326 (CTAAKYQQCGGTGYTGCTTCASGSTCSAVSPPYYSQCL) enclose the CBM1 domain.

The protein belongs to the polysaccharide monooxygenase AA9 family. It depends on Cu(2+) as a cofactor.

The protein resides in the secreted. The catalysed reaction is [(1-&gt;4)-beta-D-glucosyl]n+m + reduced acceptor + O2 = 4-dehydro-beta-D-glucosyl-[(1-&gt;4)-beta-D-glucosyl]n-1 + [(1-&gt;4)-beta-D-glucosyl]m + acceptor + H2O.. Lytic polysaccharide monooxygenase (LPMO) that depolymerizes crystalline and amorphous polysaccharides via the oxidation of scissile alpha- or beta-(1-4)-glycosidic bonds, yielding C1 and C4 oxidation products. Catalysis by LPMOs requires the reduction of the active-site copper from Cu(II) to Cu(I) by a reducing agent and H(2)O(2) or O(2) as a cosubstrate. Shows no activity on wheat arabinoxylan, konjac glucomannan, acetylated spruce galactoglucomannan, or cellopentaose. In Thermothielavioides terrestris (strain ATCC 38088 / NRRL 8126) (Thielavia terrestris), this protein is AA9 family lytic polysaccharide monooxygenase B.